The sequence spans 134 residues: Profilin-1 (134 aa).

A disulfide bridge connects residues cysteine 13 and cysteine 118. The short motif at 84–100 is the Involved in PIP2 interaction element; the sequence is AVIRGKKGSGGITIKKT. Threonine 114 carries the phosphothreonine modification.

It belongs to the profilin family. Occurs in many kinds of cells as a complex with monomeric actin in a 1:1 ratio. Phosphorylated by MAP kinases.

The protein resides in the cytoplasm. It localises to the cytoskeleton. In terms of biological role, binds to actin and affects the structure of the cytoskeleton. At high concentrations, profilin prevents the polymerization of actin, whereas it enhances it at low concentrations. The sequence is that of Profilin-1 from Olea europaea (Common olive).